The chain runs to 42 residues: Proline-rich antimicrobial peptide 2 (42 aa).

In terms of tissue distribution, hemolymph.

The protein resides in the secreted. Functionally, antimicrobial protein. Has antibacterial activity against the Gram-positive bacterium M.luteus (MIC=8.6 uM). Lacks antibacterial activity against the Gram-positive bacteria B.circulans, L.monocytogenes, S.aureus, and S.lutea, and the Gram-negative bacteria E.coli D31, E.coli ATCC 25922, and S.typhimurium. Lacks antifungal activity against S.cerevisiae, P.pastoris, Z.marxianus, C.albicans, C.fructus, C.wickerhamii, A.niger, F.oxysporum, and T.harizianum. This Galleria mellonella (Greater wax moth) protein is Proline-rich antimicrobial peptide 2.